We begin with the raw amino-acid sequence, 4244 residues long: Tenascin-X (4244 aa).

The first 23 residues, 1-23, serve as a signal peptide directing secretion; that stretch reads MMPAQYALTSSLVLLVLLSTARA. Residues 27-57 are disordered; sequence SSRSNVTLPAPRPPPQPGGHTVGAGVGSPSS. Residue N31 is glycosylated (N-linked (GlcNAc...) asparagine). The EGF-like 1; incomplete domain maps to 156–168; sequence CSCEPGWGGPTCS. Positions 169–189 are disordered; the sequence is DPTDAEIPPSSPPSASGSCPD. EGF-like domains lie at 183-213, 214-244, 245-275, 276-306, 307-337, 338-368, 369-399, 400-430, 431-461, 462-492, 493-523, 524-554, 555-585, 586-616, 617-647, 648-679, 684-714, and 715-746; these read ASGS…GPSC, GWPS…GPDC, SQRS…GDDC, GMRS…GEDC, GVRS…GEDC, GTRS…GEDC, STRT…GDDC, GVRS…GTDC, GSRA…GEDC, GVRS…GRDC, GTRA…GEDC, GSRR…GEDC, STRS…GEDC, GVRQ…SEDC, SIRT…GPTC, ATRM…EDCG, PASA…GPDC, and AIQT…EDCG. 54 disulfide bridges follow: C187–C197, C191–C202, C204–C213, C218–C228, C222–C233, C235–C244, C249–C259, C253–C264, C266–C275, C280–C290, C284–C295, C297–C306, C311–C321, C315–C326, C328–C337, C342–C352, C346–C357, C359–C368, C373–C383, C377–C388, C390–C399, C404–C414, C408–C419, C421–C430, C435–C445, C439–C450, C452–C461, C466–C476, C470–C481, C483–C492, C497–C507, C501–C512, C514–C523, C528–C538, C532–C543, C545–C554, C559–C569, C563–C574, C576–C585, C590–C600, C594–C605, C607–C616, C621–C631, C625–C636, C638–C647, C652–C662, C656–C667, C669–C678, C688–C698, C692–C703, C705–C714, C719–C729, C723–C734, and C736–C745. The disordered stretch occupies residues 926-956; the sequence is TGSSPLGLLGTTDEPPPSGPSTTQGAQAPLL. Fibronectin type-III domains lie at 959-1051, 1064-1153, 1161-1249, 1263-1352, 1374-1468, 1476-1572, 1574-1669, 1674-1764, 1778-1868, and 1883-1971; these read RPQE…IMDK, RLGE…PQSD, HLGN…APER, LLGE…PQED, LLGE…TPPA, RLGE…TEAS, PPLE…RGDA, PPRL…ARSA, LGEE…REET, and HLGE…VPEE. The disordered stretch occupies residues 1340–1372; the sequence is PESVVAKTAPQEDVDETPSPTELGTEAPESPEE. Residues 1666 to 1668 carry the Cell attachment site motif; the sequence is RGD. Residues 1752-1777 form a disordered region; it reads PLTADGTTEARSAMDDTGTKRPPKPR. Positions 1968 to 1990 are disordered; the sequence is VPEEEKPSEPPTATPEPPIKPRL. Pro residues predominate over residues 1976–1987; it reads EPPTATPEPPIK. Fibronectin type-III domains lie at 1989–2089, 2097–2185, 2196–2296, 2305–2398, and 2408–2502; these read RLGE…SMEA, LLGE…APEE, RLGQ…TEPP, RLEE…TPSP, and PPEE…PQED. Residues 2281-2304 form a disordered region; it reads APGKDEEMAPASTEPPTPEPPIKP. The disordered stretch occupies residues 2495 to 2542; that stretch reads GVTAPQEDVDETPSPTEPGTEAPGPPEEPLLGELTVTGSSPDSLSLSW. Low complexity predominate over residues 2506-2516; that stretch reads TPSPTEPGTEA. Fibronectin type-III domains lie at 2519–2617, 2625–2723, 2733–2840, 2841–2939, 2949–3042, 3062–3153, 3168–3260, 3264–3355, 3357–3446, 3451–3544, 3553–3647, 3657–3754, 3758–3847, 3848–3934, and 3935–4025; these read PPEE…TTQA, PPIK…TPSP, PPEE…TTPE, PPNK…TPAP, PPEE…APKD, RLGE…TPSP, LLGE…TPLP, RLGE…TKPS, RLGE…PLEK, HLGE…TPAP, PPEE…LAPA, RLSQ…TLSP, SPRD…VPDG, PTQL…TGLE, and APRD…LRIP. The span at 2530–2542 shows a compositional bias: polar residues; sequence VTGSSPDSLSLSW. Disordered stretches follow at residues 2824-2847 and 2933-2969; these read PEDE…KPRL and EEET…DSLS. Over residues 2937–2946 the composition is skewed to low complexity; that stretch reads PAPTEPSTEA. Residues 2960-2969 show a composition bias toward polar residues; that stretch reads VTGSSPDSLS. Disordered regions lie at residues 3536–3559 and 3636–3662; these read APEE…EPRL and LSAE…SQLS. N-linked (GlcNAc...) asparagine glycans are attached at residues N3855, N3908, and N3920. The 216-residue stretch at 4021-4236 folds into the Fibrinogen C-terminal domain; that stretch reads GLRIPFPRDC…FTEMKLRPRN (216 aa). An intrachain disulfide couples C4030 to C4060. An N-linked (GlcNAc...) asparagine glycan is attached at N4095. C4182 and C4195 are oxidised to a cystine.

It belongs to the tenascin family. Homotrimer. Interacts with type I, III and V collagens and tropoelastin via its 29th fibronectin type-III domain. Highly expressed in fetal adrenal, in fetal testis, fetal smooth, striated and cardiac muscle. Isoform XB-short is only expressed in the adrenal gland.

It is found in the secreted. Its subcellular location is the extracellular space. The protein resides in the extracellular matrix. Functionally, appears to mediate interactions between cells and the extracellular matrix. Substrate-adhesion molecule that appears to inhibit cell migration. Accelerates collagen fibril formation. May play a role in supporting the growth of epithelial tumors. The chain is Tenascin-X from Homo sapiens (Human).